The primary structure comprises 256 residues: ATP synthase peripheral stalk subunit b, mitochondrial (256 aa).

The N-terminal 42 residues, 1–42 (MLSRVVLSAAAAAAPSLKNAALLGPGVLQATRIFHTGQPSLA), are a transit peptide targeting the mitochondrion. At K131 the chain carries N6-succinyllysine. N6-acetyllysine is present on residues K139, K154, K162, K221, K233, and K244.

It belongs to the eukaryotic ATPase B chain family. In terms of assembly, component of the ATP synthase complex composed at least of ATP5F1A/subunit alpha, ATP5F1B/subunit beta, ATP5MC1/subunit c (homooctomer), MT-ATP6/subunit a, MT-ATP8/subunit 8, ATP5ME/subunit e, ATP5MF/subunit f, ATP5MG/subunit g, ATP5MK/subunit k, ATP5MJ/subunit j, ATP5F1C/subunit gamma, ATP5F1D/subunit delta, ATP5F1E/subunit epsilon, ATP5PF/subunit F6, ATP5PB/subunit b, ATP5PD/subunit d, ATP5PO/subunit OSCP. ATP synthase complex consists of a soluble F(1) head domain (subunits alpha(3) and beta(3)) - the catalytic core - and a membrane F(0) domain - the membrane proton channel (subunits c, a, 8, e, f, g, k and j). These two domains are linked by a central stalk (subunits gamma, delta, and epsilon) rotating inside the F1 region and a stationary peripheral stalk (subunits F6, b, d, and OSCP).

It localises to the mitochondrion. It is found in the mitochondrion inner membrane. Subunit b, of the mitochondrial membrane ATP synthase complex (F(1)F(0) ATP synthase or Complex V) that produces ATP from ADP in the presence of a proton gradient across the membrane which is generated by electron transport complexes of the respiratory chain. ATP synthase complex consist of a soluble F(1) head domain - the catalytic core - and a membrane F(1) domain - the membrane proton channel. These two domains are linked by a central stalk rotating inside the F(1) region and a stationary peripheral stalk. During catalysis, ATP synthesis in the catalytic domain of F(1) is coupled via a rotary mechanism of the central stalk subunits to proton translocation. In vivo, can only synthesize ATP although its ATP hydrolase activity can be activated artificially in vitro. Part of the complex F(0) domain. Part of the complex F(0) domain and the peripheric stalk, which acts as a stator to hold the catalytic alpha(3)beta(3) subcomplex and subunit a/ATP6 static relative to the rotary elements. This chain is ATP synthase peripheral stalk subunit b, mitochondrial, found in Bos taurus (Bovine).